A 354-amino-acid chain; its full sequence is Fusarinine C esterase sidJ (354 aa).

Belongs to the sidJ hydrolase family. In terms of assembly, homodimer.

It catalyses the reaction fusarinine C + 3 H2O = 3 fusarinine + Fe(3+). In terms of biological role, displays specific fusarinine C (FsC) esterase activity but does not hydrolyze triacetylfusarinine C (TAFC), which has the same core structure as fusarinine C. Both extra- and intracellular siderophores have been shown to be crucial for the virulence. Subsequent to chelation of iron and uptake, FsC and TAFC are hydrolyzed and the iron is transferred to the metabolism or to the intracellular siderophore ferricrocin (FC) for transport and storage of iron. This is Fusarinine C esterase sidJ from Aspergillus fumigatus (strain ATCC MYA-4609 / CBS 101355 / FGSC A1100 / Af293) (Neosartorya fumigata).